The following is a 471-amino-acid chain: Tigger transposable element-derived protein 3 (471 aa).

An HTH psq-type domain is found at 3–55; that stretch reads LSSKKKLHALSLAEKIQVLELLDESKMSQSEVARRFQVSQPQISRICKNKEKL. DNA-binding regions (H-T-H motif) lie at residues 31–51 and 100–130; these read QSEV…ICKN and PMLL…WKRR. The HTH CENPB-type domain occupies 67 to 137; sequence ERKRKRESKY…KRRNNVGFGA (71 aa). The DDE-1 domain maps to 167-360; it reads FSPEDVFGCA…VPPQLIFSSF (194 aa).

This sequence belongs to the tigger transposable element derived protein family.

It localises to the nucleus. The sequence is that of Tigger transposable element-derived protein 3 (TIGD3) from Homo sapiens (Human).